The following is a 527-amino-acid chain: Phosphoenolpyruvate carboxykinase (ATP) (527 aa).

3 residues coordinate substrate: Arg56, Tyr191, and Lys197. ATP contacts are provided by residues Lys197, His216, and 232 to 240 (GLSGTGKTT). Residues Lys197 and His216 each contribute to the Mn(2+) site. Position 253 (Asp253) interacts with Mn(2+). ATP-binding positions include Glu281, Arg318, 437–438 (RI), and Thr443. Arg318 provides a ligand contact to substrate.

The protein belongs to the phosphoenolpyruvate carboxykinase (ATP) family. Requires Mn(2+) as cofactor.

It is found in the cytoplasm. It catalyses the reaction oxaloacetate + ATP = phosphoenolpyruvate + ADP + CO2. Its pathway is carbohydrate biosynthesis; gluconeogenesis. In terms of biological role, involved in the gluconeogenesis. Catalyzes the conversion of oxaloacetate (OAA) to phosphoenolpyruvate (PEP) through direct phosphoryl transfer between the nucleoside triphosphate and OAA. In Shouchella clausii (strain KSM-K16) (Alkalihalobacillus clausii), this protein is Phosphoenolpyruvate carboxykinase (ATP).